The following is a 345-amino-acid chain: S-adenosylmethionine:tRNA ribosyltransferase-isomerase (345 aa).

The protein belongs to the QueA family. Monomer.

It is found in the cytoplasm. The enzyme catalyses 7-aminomethyl-7-carbaguanosine(34) in tRNA + S-adenosyl-L-methionine = epoxyqueuosine(34) in tRNA + adenine + L-methionine + 2 H(+). It functions in the pathway tRNA modification; tRNA-queuosine biosynthesis. In terms of biological role, transfers and isomerizes the ribose moiety from AdoMet to the 7-aminomethyl group of 7-deazaguanine (preQ1-tRNA) to give epoxyqueuosine (oQ-tRNA). This chain is S-adenosylmethionine:tRNA ribosyltransferase-isomerase, found in Helicobacter pylori (strain HPAG1).